Here is a 151-residue protein sequence, read N- to C-terminus: UPF0251 protein Ctha_0452 (151 aa).

The protein belongs to the UPF0251 family.

This chain is UPF0251 protein Ctha_0452, found in Chloroherpeton thalassium (strain ATCC 35110 / GB-78).